We begin with the raw amino-acid sequence, 237 residues long: MRKSVDELSARLGVTFSDQRLLEQALTHSSFLNEHVEERMHLDSNERLEFLGDAIINFLAARLVFERFPDAGEGELTAWRTALIRTETLAGFAQRYNLGAYVLLARGEESSGARQRQALLADTFEAVIAALFLDQGLNAVRTFLLPLFEAELASLPDRTLPVDYKSRLQARIQAERRVTPRYHEIDRSGPEHRPEFTVEVRAGEERLGTGKGPSKQAAEQAAARAALDALEGGTDGR.

The 132-residue stretch at 5 to 136 folds into the RNase III domain; sequence VDELSARLGV…VIAALFLDQG (132 aa). Position 49 (glutamate 49) interacts with Mg(2+). Residue aspartate 53 is part of the active site. The Mg(2+) site is built by aspartate 122 and glutamate 125. The active site involves glutamate 125. The 70-residue stretch at 163 to 232 folds into the DRBM domain; that stretch reads DYKSRLQARI…ARAALDALEG (70 aa). Positions 185–208 are enriched in basic and acidic residues; the sequence is IDRSGPEHRPEFTVEVRAGEERLG. Positions 185–237 are disordered; that stretch reads IDRSGPEHRPEFTVEVRAGEERLGTGKGPSKQAAEQAAARAALDALEGGTDGR. Over residues 216–231 the composition is skewed to low complexity; it reads QAAEQAAARAALDALE.

It belongs to the ribonuclease III family. Homodimer. The cofactor is Mg(2+).

The protein resides in the cytoplasm. It carries out the reaction Endonucleolytic cleavage to 5'-phosphomonoester.. In terms of biological role, digests double-stranded RNA. Involved in the processing of primary rRNA transcript to yield the immediate precursors to the large and small rRNAs (23S and 16S). Processes some mRNAs, and tRNAs when they are encoded in the rRNA operon. Processes pre-crRNA and tracrRNA of type II CRISPR loci if present in the organism. The sequence is that of Ribonuclease 3 from Roseiflexus sp. (strain RS-1).